The following is a 714-amino-acid chain: Forkhead box protein P2 (714 aa).

A compositionally biased stretch (polar residues) spans 1 to 28; the sequence is MMQESATETISNSSMNQNGMSTLSSQLD. 2 disordered regions span residues 1–45 and 284–338; these read MMQE…SEVS and KHGG…TGAS. Residues 291 to 304 are compositionally biased toward low complexity; sequence TTNNSSSTTSSTTS. Residues 314-323 are compositionally biased toward polar residues; it reads SIVNGQSSVL. Positions 325 to 336 are enriched in basic and acidic residues; it reads ARRDSSSHEETG. The C2H2-type zinc finger occupies 345 to 370; sequence GVCKWPGCESICEDFGQFLKHLNNEH. Positions 387–408 are leucine-zipper; sequence VQQLEIQLSKERERLQAMMTHL. The tract at residues 421-425 is CTBP1-binding; that stretch reads PLNLV. The segment covering 437–458 has biased composition (low complexity); the sequence is TSPQSLPQTPTTPTAPVTPITQ. Positions 437-464 are disordered; it reads TSPQSLPQTPTTPTAPVTPITQGPSVIT. The segment at residues 503–593 is a DNA-binding region (fork-head); it reads RPPFTYATLI…SQKITGSPTL (91 aa). Disordered regions lie at residues 648 to 667 and 677 to 714; these read LDHI…QPHI and VIAE…EDLE. Over residues 698 to 714 the composition is skewed to acidic residues; sequence LEDDREIEEEPLSEDLE.

Forms homodimers and heterodimers with FOXP1 and FOXP4. Dimerization is required for DNA-binding. Interacts with CTBP1. Interacts with FOXP1. Interacts with TBR1. Interacts with ZMYM2.

It is found in the nucleus. Its function is as follows. Transcriptional repressor that may play a role in the specification and differentiation of lung epithelium. May also play a role in developing neural, gastrointestinal and cardiovascular tissues. Can act with CTBP1 to synergistically repress transcription but CTPBP1 is not essential. Plays a role in synapse formation by regulating SRPX2 levels. This Macaca mulatta (Rhesus macaque) protein is Forkhead box protein P2 (FOXP2).